Here is a 277-residue protein sequence, read N- to C-terminus: Large ribosomal subunit protein uL2 (277 aa).

A disordered region spans residues 222-259 (GSVMNPNDHPHGGGEGKSPVGRPSPVTPWGKPALGYKT).

It belongs to the universal ribosomal protein uL2 family. As to quaternary structure, part of the 50S ribosomal subunit. Forms a bridge to the 30S subunit in the 70S ribosome.

Functionally, one of the primary rRNA binding proteins. Required for association of the 30S and 50S subunits to form the 70S ribosome, for tRNA binding and peptide bond formation. It has been suggested to have peptidyltransferase activity; this is somewhat controversial. Makes several contacts with the 16S rRNA in the 70S ribosome. In Clostridium beijerinckii (strain ATCC 51743 / NCIMB 8052) (Clostridium acetobutylicum), this protein is Large ribosomal subunit protein uL2.